A 150-amino-acid polypeptide reads, in one-letter code: Peptide deformylase (150 aa).

Fe cation-binding residues include cysteine 88 and histidine 130. Glutamate 131 is an active-site residue. A Fe cation-binding site is contributed by histidine 134.

Belongs to the polypeptide deformylase family. It depends on Fe(2+) as a cofactor.

It catalyses the reaction N-terminal N-formyl-L-methionyl-[peptide] + H2O = N-terminal L-methionyl-[peptide] + formate. In terms of biological role, removes the formyl group from the N-terminal Met of newly synthesized proteins. Requires at least a dipeptide for an efficient rate of reaction. N-terminal L-methionine is a prerequisite for activity but the enzyme has broad specificity at other positions. The protein is Peptide deformylase of Desulfitobacterium hafniense (strain DSM 10664 / DCB-2).